A 534-amino-acid polypeptide reads, in one-letter code: CTP synthase (534 aa).

Residues 1–267 (MTKYIFVTGG…DQIVCDHLKL (267 aa)) form an amidoligase domain region. CTP is bound at residue Ser-13. Ser-13 lines the UTP pocket. Position 14–19 (14–19 (SIGKGI)) interacts with ATP. L-glutamine is bound at residue Tyr-54. Asp-71 is a binding site for ATP. Residues Asp-71 and Glu-141 each coordinate Mg(2+). Residues 148–150 (DIE), 188–193 (KTKPTQ), and Lys-224 contribute to the CTP site. Residues 188-193 (KTKPTQ) and Lys-224 contribute to the UTP site. The Glutamine amidotransferase type-1 domain maps to 292 to 534 (KIALVGKYVE…FVTAAVENMK (243 aa)). Residue Gly-354 coordinates L-glutamine. Residue Cys-381 is the Nucleophile; for glutamine hydrolysis of the active site. Residues 382-385 (LGMQ), Glu-405, and Arg-463 each bind L-glutamine. Residues His-508 and Glu-510 contribute to the active site.

The protein belongs to the CTP synthase family. Homotetramer.

The enzyme catalyses UTP + L-glutamine + ATP + H2O = CTP + L-glutamate + ADP + phosphate + 2 H(+). The catalysed reaction is L-glutamine + H2O = L-glutamate + NH4(+). It catalyses the reaction UTP + NH4(+) + ATP = CTP + ADP + phosphate + 2 H(+). It participates in pyrimidine metabolism; CTP biosynthesis via de novo pathway; CTP from UDP: step 2/2. Allosterically activated by GTP, when glutamine is the substrate; GTP has no effect on the reaction when ammonia is the substrate. The allosteric effector GTP functions by stabilizing the protein conformation that binds the tetrahedral intermediate(s) formed during glutamine hydrolysis. Inhibited by the product CTP, via allosteric rather than competitive inhibition. Catalyzes the ATP-dependent amination of UTP to CTP with either L-glutamine or ammonia as the source of nitrogen. Regulates intracellular CTP levels through interactions with the four ribonucleotide triphosphates. This is CTP synthase from Streptococcus agalactiae serotype V (strain ATCC BAA-611 / 2603 V/R).